Here is a 936-residue protein sequence, read N- to C-terminus: Protocadherin alpha-5 (936 aa).

An N-terminal signal peptide occupies residues 1–28 (MVYSRRGSLGSRLLLLWLLLAYWKAGSG). Residues 29 to 696 (QLHYSIPEEA…GPEAALVDVN (668 aa)) lie on the Extracellular side of the membrane. 6 consecutive Cadherin domains span residues 33-132 (SIPE…PPRF), 156-241 (ASDL…APEF), 242-349 (DKSI…TPEM), 350-454 (AITT…LRAF), 455-564 (AQPQ…APAL), and 580-677 (VPRS…APKA). Residues N264, N448, and N547 are each glycosylated (N-linked (GlcNAc...) asparagine). The chain crosses the membrane as a helical span at residues 697 to 717 (VYLIIAICAVSSLLVLTLLLY). Residues 718 to 936 (TALRCSAQPT…GNSTTDNSDQ (219 aa)) lie on the Cytoplasmic side of the membrane. 3 disordered regions span residues 759–793 (SGEA…PDWR), 815–875 (RAGP…DKFI), and 887–936 (QEPA…NSDQ). PXXP repeat units lie at residues 773 to 776 (PSLP), 785 to 788 (PRQP), 818 to 821 (PGGP), 873 to 876 (KFII), and 877 to 890 (PGSP…QEPA). Residues 773–890 (PSLPQGPTST…AIISIRQEPA (118 aa)) form a 5 X 4 AA repeats of P-X-X-P region. The span at 774 to 786 (SLPQGPTSTDNPR) shows a compositional bias: polar residues. The segment covering 895-909 (DKSDFITFGKKEETK) has biased composition (basic and acidic residues).

It localises to the cell membrane. Its function is as follows. Potential calcium-dependent cell-adhesion protein. May be involved in the establishment and maintenance of specific neuronal connections in the brain. The chain is Protocadherin alpha-5 (PCDHA5) from Pan troglodytes (Chimpanzee).